Here is a 150-residue protein sequence, read N- to C-terminus: Endoribonuclease YbeY (150 aa).

Zn(2+) contacts are provided by H112, H116, and D122.

It belongs to the endoribonuclease YbeY family. The cofactor is Zn(2+).

The protein resides in the cytoplasm. In terms of biological role, single strand-specific metallo-endoribonuclease involved in late-stage 70S ribosome quality control and in maturation of the 3' terminus of the 16S rRNA. This is Endoribonuclease YbeY from Protochlamydia amoebophila (strain UWE25).